The sequence spans 676 residues: Transcription factor RLM1 (676 aa).

Positions 3-57 (RRKIEIQRISDDRNRAVTFIKRKAGLFKKAHELSVLCQVDIAVIILGSNNTFYEF) constitute an MADS-box domain. Residues 58 to 87 (SSVDTNDLIYHYQNDKNLLHEVKDPSDYGD) constitute a DNA-binding region (mef2-type). Positions 103-120 (SSMSNKPSKSNVKGMNQS) are enriched in polar residues. The disordered stretch occupies residues 103 to 156 (SSMSNKPSKSNVKGMNQSENDDDENNDEDDDDHGNFERNSNMHSNKKASDKNIP). Phosphoserine is present on Ser-120. Positions 121-134 (ENDDDENNDEDDDD) are enriched in acidic residues. Ser-164 is subject to Phosphoserine. A compositionally biased stretch (basic and acidic residues) spans 173–183 (DGSEQNKRHPE). Disordered regions lie at residues 173–192 (DGSE…LQHL), 202–318 (ISRT…RRKL), 330–424 (NNNF…PFGS), 472–514 (KKQS…VHDL), and 532–631 (MGPN…NSST). A compositionally biased stretch (polar residues) spans 260 to 276 (ISPNKFSKPFTNASSRT). Residues 284 to 295 (NNSGSNNNDNSN) show a composition bias toward low complexity. Over residues 296-312 (YTQSPSNSLEDSIQQTV) the composition is skewed to polar residues. Composition is skewed to low complexity over residues 334 to 359 (SSNS…MGSS), 368 to 381 (SRSS…ASAS), and 399 to 417 (PNAN…NNNN). Phosphoserine occurs at positions 374 and 377. Residues 472–506 (KKQSQTVPLTTTLTGRPPSTFSGPETSNGPPTGSL) show a composition bias toward polar residues. Positions 539 to 604 (PGNTNNPGTF…NSNNSYYSNN (66 aa)) are enriched in low complexity. The span at 621 to 631 (GDSNNQSNSST) shows a compositional bias: polar residues.

Belongs to the MEF2 family. In terms of assembly, can heterodimerize with SPM1. Interacts with KDX1 and SLT2. Phosphorylated by SLT2.

Its subcellular location is the nucleus. In terms of biological role, may function as a transcription factor downstream of MPK1 that is subject to activation by the MPK1 mitogen-activated protein kinase pathway. Binds to the DNA sequence 5'-CTA[TA](4)TAG-3'. At least some RML1 target genes are involved in cell wall biosynthesis. The sequence is that of Transcription factor RLM1 (RLM1) from Saccharomyces cerevisiae (strain ATCC 204508 / S288c) (Baker's yeast).